A 118-amino-acid chain; its full sequence is Beta-elicitin cryptogein (118 aa).

The signal sequence occupies residues 1 to 20; sequence MNFTALLAAVAAALVGSANA. 3 cysteine pairs are disulfide-bonded: cysteine 23-cysteine 91, cysteine 47-cysteine 76, and cysteine 71-cysteine 115.

It belongs to the elicitin family.

The protein localises to the secreted. Induces local and distal defense responses (incompatible hypersensitive reaction) in plants from the solanaceae and cruciferae families. Elicits leaf necrosis and causes the accumulation of pathogenesis-related proteins. Might interact with the lipidic molecules of the plasma membrane. The polypeptide is Beta-elicitin cryptogein (Phytophthora cryptogea).